A 470-amino-acid chain; its full sequence is Zinc finger protein pat-9 (470 aa).

Residues 1-25 (MENRTPMQHHSGYEIVKSEPPSTPK) are disordered. 3 consecutive C2H2-type zinc fingers follow at residues 84–106 (YPCNLCSSKFGSKMELEEHQNSH), 112–134 (FECDTCNARFNRRSTLWNHKRIH), and 140–162 (FVCTVCQMTFKWKNSLKCHKDMH). Positions 191-235 (MEQEENGGLPASSSASSVISHPLITTTSGNKKRSKAAKAKQTPSS) are disordered. The short motif at 221–230 (KKRSKAAKAK) is the Nuclear localization signal element.

This sequence belongs to the krueppel C2H2-type zinc-finger protein family. As to expression, expressed in body wall muscle and gonad (at protein level).

Its subcellular location is the nucleus. The protein resides in the chromosome. Its function is as follows. Probable transcription factor; required for proper organization of muscle myofilaments and for their recruitment to the M line. The chain is Zinc finger protein pat-9 from Caenorhabditis elegans.